We begin with the raw amino-acid sequence, 129 residues long: Small ribosomal subunit protein bS6 (129 aa).

The protein belongs to the bacterial ribosomal protein bS6 family.

Binds together with bS18 to 16S ribosomal RNA. The sequence is that of Small ribosomal subunit protein bS6 from Microcystis aeruginosa (strain NIES-843 / IAM M-2473).